We begin with the raw amino-acid sequence, 420 residues long: MALYCGDNFGVYSQPGLPPPAATAAAPGAPPAARAPYGLADYAAPPAAAANPYLWLNGPGVGGPPSAAAAAAAAYLGAPPPPPPPGAAAGPFLQPPPAAGTFGCSQRPFAQPAPAAPASPAAPAGPGELGWLSMASREDLMKMVRPPYSYSALIAMAIQSAPERKLTLSHIYQFVADSFPFYQRSKAGWQNSIRHNLSLNDCFKKVPRDEDDPGKGNYWTLDPNCEKMFDNGNFRRKRKRRSEASNGSTVAAGTSKSEEGLSSGLGSGVGGKPEEESPSTLLRPSHSPEPPEGTKSTASSPGGPMLTSTPCLNTFFSSLSSLSVSSSVSTQRALPGSRHLGIQGAQLPSSGVFSPTSISEASADTLQLSNSTSNSTGQRSSYYSPFPASTSGGQSSPFSSPFHNFSMVNSLIYPREGSEV.

3 disordered regions span residues 103 to 122, 234 to 306, and 364 to 396; these read GCSQ…SPAA, FRRK…GPML, and DTLQ…GQSS. Residues 108 to 122 show a composition bias toward low complexity; that stretch reads PFAQPAPAAPASPAA. The residue at position 119 (serine 119) is a Phosphoserine. The segment at residues 145–239 is a DNA-binding region (fork-head); it reads RPPYSYSALI…DNGNFRRKRK (95 aa). The short motif at 235 to 241 is the Nuclear localization signal element; that stretch reads RRKRKRR. A phosphoserine mark is found at serine 277, serine 285, and serine 287. A compositionally biased stretch (polar residues) spans 294-306; the sequence is TKSTASSPGGPML. The 9aaTAD signature appears at 406–414; it reads SMVNSLIYP.

In terms of processing, phosphorylation promotes the transcription factor activity. Dephosphorylation by protein phosphatase 2A (PP2A) reduces its activity.

Its subcellular location is the nucleus. In terms of biological role, transcription factor required for pharyngeal arch development, which is involved in hair, ear, jaw and dental development. May act as a pioneer transcription factor during pharyngeal arch development. Required for epithelial cell differentiation within the epidermis. Acts at multiple stages of otic placode induction: necessary for preplacodal ectoderm to execute an inner ear program. Required for hair follicle stem cell specification. Acts downstream of TBX1 for the formation of the thymus and parathyroid glands from the third pharyngeal pouch. The protein is Forkhead box protein I3 of Homo sapiens (Human).